Consider the following 120-residue polypeptide: MIALGGASGACLRFFISESMLKLLGRGFPFGTLAVNILGSLLMGILYGLLDKDIIAESPAKALIGVGFLGALTTFSTFSMDSLLLLQQGHFIKMALNIILNVMVCIFMAWLGLQLVMQKG.

Transmembrane regions (helical) follow at residues 30-50 (FGTL…YGLL), 66-86 (VGFL…LLLL), and 96-116 (LNII…LQLV). Na(+) contacts are provided by Gly-70 and Thr-73.

This sequence belongs to the fluoride channel Fluc/FEX (TC 1.A.43) family.

It localises to the cell inner membrane. The catalysed reaction is fluoride(in) = fluoride(out). With respect to regulation, na(+) is not transported, but it plays an essential structural role and its presence is essential for fluoride channel function. Fluoride-specific ion channel. Important for reducing fluoride concentration in the cell, thus reducing its toxicity. This Pseudoalteromonas translucida (strain TAC 125) protein is Fluoride-specific ion channel FluC.